The following is a 158-amino-acid chain: Endoribonuclease YbeY (158 aa).

Zn(2+) is bound by residues His118, His122, and His128.

It belongs to the endoribonuclease YbeY family. Zn(2+) serves as cofactor.

Its subcellular location is the cytoplasm. Its function is as follows. Single strand-specific metallo-endoribonuclease involved in late-stage 70S ribosome quality control and in maturation of the 3' terminus of the 16S rRNA. The polypeptide is Endoribonuclease YbeY (Bartonella bacilliformis (strain ATCC 35685 / KC583 / Herrer 020/F12,63)).